Here is a 254-residue protein sequence, read N- to C-terminus: PAXIP1-associated glutamate-rich protein 1 (254 aa).

Disordered stretches follow at residues 1 to 111 and 127 to 254; these read MSLA…PPSE and LQAE…QRKY. Residues 45-62 show a composition bias toward basic and acidic residues; it reads KAEDEGEGGREETEREGS. A compositionally biased stretch (acidic residues) spans 78–98; the sequence is EPAEEDSEDWCVPCSDEEVEL. The tract at residues 116–160 is sufficient for interaction with NCOA1; sequence YELLAAHGTLELQAEILPRRPPTPEAQSEEERSDEEPEAKEEEEE. Position 138 is a phosphothreonine (threonine 138). Acidic residues predominate over residues 142–159; that stretch reads QSEEERSDEEPEAKEEEE. Serine 143 and serine 148 each carry phosphoserine. The interval 161–254 is sufficient for interaction with ESR1; that stretch reads KPHMPTEFDF…SSLFPRQRKY (94 aa). A compositionally biased stretch (basic and acidic residues) spans 195 to 223; that stretch reads QKREARLDKVLSDMKRHKKLEEQILRTGR. The residue at position 237 (serine 237) is a Phosphoserine.

Component of the KMT2 family MLL2/MLL3 complex (also named ASCOM complex), at least composed of the HMTs KMT2D and/or KMT2C, the common subunits ASH2L, RBBP5, WDR5 and DPY30, and the complex type-specific subunits PAXIP1/PTIP, PAGR1, NCOA6 and KDM6A; PAXIP1 is required for the association with the MLL2/MLL3 complex. Forms a constitutive complex with PAXIP1/PTIP independently of the MLL2/MLL3 complex. Interacts with NCOA1, ESR1, NR3C1, AR. As to expression, ubiquitously expressed.

Its subcellular location is the nucleus. In terms of biological role, its association with the histone methyltransferase MLL2/MLL3 complex is suggesting a role in epigenetic transcriptional activation. However, in association with PAXIP1/PTIP is proposed to function at least in part independently of the MLL2/MLL3 complex. Proposed to be recruited by PAXIP1 to sites of DNA damage where the PAGR1:PAXIP1 complex is required for cell survival in response to DNA damage independently of the MLL2/MLL3 complex. However, its function in DNA damage has been questioned. During immunoglobulin class switching in activated B-cells is involved in transcription regulation of downstream switch regions at the immunoglobulin heavy-chain (Igh) locus independently of the MLL2/MLL3 complex. Involved in both estrogen receptor-regulated gene transcription and estrogen-stimulated G1/S cell-cycle transition. Acts as a transcriptional cofactor for nuclear hormone receptors. Inhibits the induction properties of several steroid receptors such as NR3C1, AR and PPARG; the mechanism of inhibition appears to be gene-dependent. This chain is PAXIP1-associated glutamate-rich protein 1 (PAGR1), found in Homo sapiens (Human).